Consider the following 427-residue polypeptide: MSVSFENKETNRGVLTFTISQDQIKPELDRVFKSVKKSLNVPGFRKGHLPRPIFDKKFGEESLYQDVMNALLPNAYEAAVKEAGLEVVAQPKIDVTSMEKGQDWVIAAEVVTKPEVKLGDYKNLEVSVDVEKEVTDADVEERIERERNNLAELVIKEAAAENGDTVVIDFVGSIDGVEFDGGKGENFSLGLGSGQFIPGFEDQLVGHSAGETVDVIVTFPEDYQAEDLAGKEAKFVTTIHEVKAKEVPALDDELAKDIDEEVETLADLKEKYRKELAAAKEEAYKDAVEGAAIDTAVENAEIVELPEEMIHEEVHRSVNEFLGNLQRQGINPDMYFQITGTTQEDLHNQYQAEAESRTKTNLVIEAVAKAEGFDASEEEIQKEVEQLAADYNMEVAQVQNLLSADMLKHDITIKKAVELITSTATVK.

The region spanning glycine 163 to proline 248 is the PPIase FKBP-type domain.

This sequence belongs to the FKBP-type PPIase family. Tig subfamily.

Its subcellular location is the cytoplasm. The enzyme catalyses [protein]-peptidylproline (omega=180) = [protein]-peptidylproline (omega=0). Its function is as follows. Involved in protein export. Acts as a chaperone by maintaining the newly synthesized protein in an open conformation. Functions as a peptidyl-prolyl cis-trans isomerase. The sequence is that of Trigger factor from Streptococcus pneumoniae (strain CGSP14).